A 509-amino-acid chain; its full sequence is Maturase K (509 aa).

This sequence belongs to the intron maturase 2 family. MatK subfamily.

The protein localises to the plastid. It is found in the chloroplast. Functionally, usually encoded in the trnK tRNA gene intron. Probably assists in splicing its own and other chloroplast group II introns. This chain is Maturase K, found in Nicotiana rustica (Aztec tobacco).